The primary structure comprises 429 residues: Histidine--tRNA ligase (429 aa).

Belongs to the class-II aminoacyl-tRNA synthetase family. Homodimer.

It localises to the cytoplasm. It carries out the reaction tRNA(His) + L-histidine + ATP = L-histidyl-tRNA(His) + AMP + diphosphate + H(+). This Streptococcus pneumoniae (strain JJA) protein is Histidine--tRNA ligase.